Here is a 214-residue protein sequence, read N- to C-terminus: Ribonuclease T (214 aa).

One can recognise an Exonuclease domain in the interval 20–195; sequence VVVDVETAGF…YDTQKTAELF (176 aa). 4 residues coordinate Mg(2+): D23, E25, H182, and D187. The active-site Proton donor/acceptor is the H182.

The protein belongs to the RNase T family. In terms of assembly, homodimer. Requires Mg(2+) as cofactor.

Trims short 3' overhangs of a variety of RNA species, leaving a one or two nucleotide 3' overhang. Responsible for the end-turnover of tRNA: specifically removes the terminal AMP residue from uncharged tRNA (tRNA-C-C-A). Also appears to be involved in tRNA biosynthesis. The protein is Ribonuclease T of Vibrio parahaemolyticus serotype O3:K6 (strain RIMD 2210633).